Here is a 311-residue protein sequence, read N- to C-terminus: Protein translocase subunit SecF (311 aa).

Transmembrane regions (helical) follow at residues 23-42, 140-160, 164-184, 194-214, 246-266, and 272-292; these read VSYSFSIILSLISLIWISIY, IEAGAMAMLFSFLAIMVYIGV, WYFGFGILIALVHDVILALGF, LSTIAAVLTIIGYSVNDSVVI, ILTVITTLLANLALILFGGKA, and VLVFFGIIAGTYSSIFISAPI.

Belongs to the SecD/SecF family. SecF subfamily. As to quaternary structure, forms a complex with SecD. Part of the essential Sec protein translocation apparatus which comprises SecA, SecYEG and auxiliary proteins SecDF-YajC and YidC.

It localises to the cell inner membrane. Its function is as follows. Part of the Sec protein translocase complex. Interacts with the SecYEG preprotein conducting channel. SecDF uses the proton motive force (PMF) to complete protein translocation after the ATP-dependent function of SecA. This Rickettsia prowazekii (strain Madrid E) protein is Protein translocase subunit SecF.